The sequence spans 274 residues: Malonyl-[acyl-carrier protein] O-methyltransferase (274 aa).

This sequence belongs to the methyltransferase superfamily.

It carries out the reaction malonyl-[ACP] + S-adenosyl-L-methionine = malonyl-[ACP] methyl ester + S-adenosyl-L-homocysteine. The protein operates within cofactor biosynthesis; biotin biosynthesis. Converts the free carboxyl group of a malonyl-thioester to its methyl ester by transfer of a methyl group from S-adenosyl-L-methionine (SAM). It allows to synthesize pimeloyl-ACP via the fatty acid synthetic pathway. The chain is Malonyl-[acyl-carrier protein] O-methyltransferase from Priestia megaterium (strain DSM 319 / IMG 1521) (Bacillus megaterium).